The sequence spans 434 residues: Ribosomal protein uS12 methylthiotransferase RimO (434 aa).

The MTTase N-terminal domain occupies 6-122; it reads NRVFLLSLGC…ILTAIGARYR (117 aa). 6 residues coordinate [4Fe-4S] cluster: C15, C51, C85, C146, C150, and C153. A Radical SAM core domain is found at 132–361; that stretch reads TAPGHTSFLK…MELQEGISEE (230 aa). Residues 364–431 enclose the TRAM domain; the sequence is KRLEGREIAV…PYELFGTVLK (68 aa).

It belongs to the methylthiotransferase family. RimO subfamily. The cofactor is [4Fe-4S] cluster.

The protein resides in the cytoplasm. The catalysed reaction is L-aspartate(89)-[ribosomal protein uS12]-hydrogen + (sulfur carrier)-SH + AH2 + 2 S-adenosyl-L-methionine = 3-methylsulfanyl-L-aspartate(89)-[ribosomal protein uS12]-hydrogen + (sulfur carrier)-H + 5'-deoxyadenosine + L-methionine + A + S-adenosyl-L-homocysteine + 2 H(+). Catalyzes the methylthiolation of an aspartic acid residue of ribosomal protein uS12. This chain is Ribosomal protein uS12 methylthiotransferase RimO, found in Chlorobium phaeovibrioides (strain DSM 265 / 1930) (Prosthecochloris vibrioformis (strain DSM 265)).